Consider the following 892-residue polypeptide: Translation initiation factor IF-2 (892 aa).

The segment at 88-304 (KKRTFVKRDP…SSLQQGFQKP (217 aa)) is disordered. 2 stretches are compositionally biased toward basic and acidic residues: residues 93–159 (VKRD…KDKV) and 166–216 (DMTK…EENK). Over residues 254–269 (GRGRNAKAARPAKKGK) the composition is skewed to basic residues. The span at 270 to 282 (HAESKADREEARA) shows a compositional bias: basic and acidic residues. Positions 391 to 560 (PRAPVVTIMG…LLQAEVLELK (170 aa)) constitute a tr-type G domain. Residues 400–407 (GHVDHGKT) are G1. 400–407 (GHVDHGKT) provides a ligand contact to GTP. Positions 425–429 (GITQH) are G2. The G3 stretch occupies residues 446 to 449 (DTPG). Residues 446-450 (DTPGH) and 500-503 (NKID) contribute to the GTP site. A G4 region spans residues 500–503 (NKID). Residues 536-538 (SAK) are G5.

Belongs to the TRAFAC class translation factor GTPase superfamily. Classic translation factor GTPase family. IF-2 subfamily.

Its subcellular location is the cytoplasm. Its function is as follows. One of the essential components for the initiation of protein synthesis. Protects formylmethionyl-tRNA from spontaneous hydrolysis and promotes its binding to the 30S ribosomal subunits. Also involved in the hydrolysis of GTP during the formation of the 70S ribosomal complex. The chain is Translation initiation factor IF-2 from Salmonella choleraesuis (strain SC-B67).